The primary structure comprises 632 residues: tRNA uridine 5-carboxymethylaminomethyl modification enzyme MnmG (632 aa).

Residues 13 to 18, Val-125, and Ser-180 contribute to the FAD site; that span reads GGGHAG. 273-287 contributes to the NAD(+) binding site; that stretch reads GPRYCPSIEDKINRF. Gln-370 is a binding site for FAD.

Belongs to the MnmG family. Homodimer. Heterotetramer of two MnmE and two MnmG subunits. Requires FAD as cofactor.

It localises to the cytoplasm. Its function is as follows. NAD-binding protein involved in the addition of a carboxymethylaminomethyl (cmnm) group at the wobble position (U34) of certain tRNAs, forming tRNA-cmnm(5)s(2)U34. This Shewanella sediminis (strain HAW-EB3) protein is tRNA uridine 5-carboxymethylaminomethyl modification enzyme MnmG.